The primary structure comprises 91 residues: Phosphocarrier protein NPr (91 aa).

An HPr domain is found at Lys3–Ala90. The active-site Pros-phosphohistidine intermediate is the His17.

This sequence belongs to the HPr family.

The protein resides in the cytoplasm. In terms of biological role, component of the phosphoenolpyruvate-dependent nitrogen-metabolic phosphotransferase system (nitrogen-metabolic PTS), that seems to be involved in regulating nitrogen metabolism. The phosphoryl group from phosphoenolpyruvate (PEP) is transferred to the phosphoryl carrier protein NPr by enzyme I-Ntr. Phospho-NPr then transfers it to EIIA-Ntr. Could function in the transcriptional regulation of sigma-54 dependent operons in conjunction with the NPr (PtsO) and EIIA-Ntr (PtsN) proteins. The sequence is that of Phosphocarrier protein NPr (ptsO) from Shewanella violacea (strain JCM 10179 / CIP 106290 / LMG 19151 / DSS12).